The following is a 4723-amino-acid chain: MSRQHQRHHQQHHHLPPHQQPQQQMPQQQQQLTAQQQQQQQLLMAEHAAAAEAAELFDLLCVATTMRQILALHRAMCEAVGLRPSPLNDFYPRLKAKVRSWKAQALWKKFDARAAHRVYGKGAACTGTRVLVIGAGPCGLRTAIEAQLLGAKVVVLEKRDRITRNNVLHLWPFVITDLRNLGAKKFYGKFCAGSIDHISIRQLQCMLLKVALLLGVEIHEGVSFDHAVEPSGDGGGWRAAVTPADHPVSHYEFDVLIGADGKRNMLDFRRKEFRGKLAIAITANFINKKTEAEAKVEEISGVAFIFNQAFFKELYGKTGIDLENIVYYKDETHYFVMTAKKHSLIDKGVIIEDMADPGELLAPANVDTQKLHDYAREAAEFSTQYQMPNLEFAVNHYGKPDVAMFDFTSMFAAEMSCRVIVRKGARLMQCLVGDSLLEPFWPTGSGCARGFLSSMDAAYAIKLWSNPQNSTLGVLAQRESIYRLLNQTTPDTLQRDISAYTVDPATRYPNLNRESVNSWQVKHLVDTDDPSILEQTFMDTHALQTPHLDTPGRRKRRSGDLLPQGATLLRWISAQLHSYQFIPELKEASDVFRNGRVLCALINRYRPDLIDYAATKDMSPVECNELSFAVLERELHIDRVMSAKQSLDLTELESRIWLNYLDQICDLFRGEIPHIKHPKMDFSDLRQKYRINHTHAQPDFSKLLATKPKAKSPMQDAVDIPTTVQRRSVLEEERAKRQRRHEQLLNIGGGAAGAAAGVAGSGTGTTTQGQNDTPRRSKKRRQVDKTANIEERQQRLQEIEENRQERMSKRRQQRYHQTQNFYKSLQLLQAGKLLREGGEAGVAEDGTPFEDYSIFLYRQQAPVFNDRVKDLERKLLFPDRERGDIPSALPRTADEQFSDRIKNMEQRMTGRGGLGGDKKPKDLMRAIGKIDSNDWNVREIEKKIELSKKTEIHGPKGREKVPKWSKEQFQARQHKMSKPQRQDSREAEKFKDIDQTIRNLDKQLKEGHNLDVGERGRNKVASIAGQFGKKDEANSDEKNAGSSNATTNTNNTVIPKSSSKVALAFKKQAASEKCRFCKQTVYLMEKTTVEGLVLHRNCLKCHHCHTNLRLGGYAFDRDDPQGRFYCTQHFRLPPKPLPQRTNKARKSAAAQPASPAVPPTAGSVPTAAATSEHMDTTPPRDQVDLLETSRANASADAMSDDEANVIDEHEWSGRNFLPESNNDSQSELSSSDESDTESDSEMFEEADDSPFGAQTLQLASDWIGKQYCEDSDDSDDFYDSSEGIADDGKDDTEGEEFKKARELRRQEVRLQPLPANLPTDTETEKLKLNVDNKENMADRSSLKSGNSFESARSQPSTPLSTPTRVEMEQLERNAPRKFSSEIEAISEKLYHMNNMVKMNKDLEVLAKENLVKSDILRKLTLKEKWLAENAAIAAGQKVTPTPSATAPGLQPKSKFDEKFEKVVSPPQPVVEPKPKPVIDFNLDELKPRKPNFEERPKEQLPRPESLKKPPQQKPKGSSTNVSRSNSLKSNASNGSPKVKKAPISNNSKMQIEGILGTLRKIQSQNSSDQDEDMDVDEDVERKPNKELNSKLKEIQASSFAGTMDHIKSQLTMPTVSAQAPPSMDLSKYFPNQKQEKSSTSSTNKNQVTLKDVNLAKYFPSSPAPQRRTVETVADRLKKSQTEAALAKTKLLEDQANNQAEKTKKEVEKEGESKKITKKVADSKAVPPKRQASLDTFSLREHQMDGALDLTKKKGPTKASAGVKKPAKSGSTTSVTKATATSKGKTIKIVKKIVPKGTKAKKAAEAAQESAVVEAPPEKKPPKDEAERILDEILGDGEYRSPSSEYQRLFQDEKSPSDLSDNIDRILEESGLDVELGLPKRSSKKLVKTKSLGEGDFDMKPSKERLTGVQNILKRFESMSSVTSQNSDEQAAFKLRRMESTTSNLSSLTRSRESLVSVSDSMSDLEKTMDYLRNEWRNEATNFLQKKRDKFYAKKEEQEKESKILAKPDPLDNLPVQYRDSKLAKFFGLAASKSPENRKSPIKKKKSPSKTPKVTKANNSLEELAKISNVRQTKKAQPKTLKPVEVKPLKPASPVPDDFEILDLLEKATEAKELERSKTKSPAVESISQTPKEAIVEISLPVEDIKNLPKTGCDKSSNSSRRGSQSSLIMSRRHSEISLNEKLNQDALAALNQIEKEREAEQVDELFQSMVEEMEQEPQPTAIVEPPEEDIDADSLCTTISKSPSAQPVTVVKRGSSEDQSIEKLFSHFSDEMLVNVEFDSNDELVGITPRATLVSRNTEDRDYLDKLESLERDEETFQPVVGEKFIQENVQDEVDGLHFPSRPQRRPKSSSSSSEPSLPVAPQRLKKKLSKLDPEDMPPSVQDLLQQVYQKNIQPELVEVIPVEGKQTLRFPSMLAEEDVDEVDHSKEGIKKIETAPEEVRKVTEPEDVARVIPSPIKPSISQSNSLKSENSSGSSLVEIPKIITPPKSSSKENSSDWDMEKLPASPMPRRRLLPNQTPYKAPSVASKESSLEWDMEKLPNSPMLPRRNKMRAISPSTNPVQLLNNLPSDVDDEAAQRRLIEDFEQERRQALIKRDENFEAIAAEQRRRDSLQSSSNSSSKRSLPPPTPPMMASRRGTTQDTNRTQDTASRHEGTPPMFKKLDVDGSGTSMDSTSCSTRRSSFAFIELQDNKPVIVPMPKKLKLPKPEPPRFVPEPVATDEPVPEVFQGRAWPKTQLEGEVDLGDSDNEDETEKLKKQLPEYARSDSPPSAAFKNRKWPDGKTVFDKRAESLEEEDIFEGLLSPRKRGSQRFMDKPRSQSPQPFKPLANSSRKSSKSFSDLKKGPSLQSLSAQSSQDTDTLSTTTTVATARPASYANYEDPMDASTQALLDRSKRLHNRKRDFVNERVVERNPYMRDVLRSTDRRDYDDVDEDLTSYRPRHYASSTLNRFPNTTIRKSNNYDYLSPSSDYLSRRSYIPSASATSSYYPSTTRSSHLSDLFRRRSPASGTVSALSGYGNKESCIGLALDRVGHLIESKCTWVRSTKVQTESESTSPDEVELNSATEISTDSEFDNDEIIRQAPKIFIDDTHLRKPTKVQIKSTMIGPNAASAGLHQKQLAAREKGGSYLQKYQPQPPLPQFKPLVQVDPTLLIGSQRAPLQNPRPGDYLLNKTASTEGIASKKSLELKKRYLLGEPANGNKIQKSGSTSVLDSRIRSFQSNISECQKLLNPSSDISAGMRTFLDRTKLGEGSQTTPGQTNELIRSATSNVINDLRVELRIQKTGSSHSTDNEKENVFVNCKNELNKGMEYTDAVNATLLDQLARKSSPTTPTNKTVVEVIDLVTPEKPIDIIDLTALETPKKQLVDGSAMDVDERLTPDSNKISELQQEVKEEPKPDVSRDVKECIPDILGHIKEGTGSKEPGGEDQQSLLEQSDEEKRDSPEKDVAEHELYEPDSVQIQVPNIPWEKSKPEVMSTTGSSGSICSSSDSSSIEDIQHYILESTTSPDTQTVGGKHNVPRLEVHDTSGALMQVDSLMIVNGKYIGDPEDVKFLDMPANVIVPPAPALKTNELDMEDDQEAEAEPVTATPEPVECTVIEAERRVTAPPPLPEMGPPKLKFDSKNENKIESLKNLPLIVESNVEHSQAVKPITLNLSNLARTPDTPTTPTAHDSDKTPTGEILSRGSDSETEHTGTGQVLTETELSDWTADDCISENFVDLEFALNSNKGTIKRRKDRRRSGASKLPSGNEVIHELARQAPVVQMDGILSAIDIDDIEFMDTGSEGSCAEAYSATNTALIQNRGYMEYIEAEPKKTTRKAAPPSSYPGNLPPLMTKRDEKLGVDYIEQGAYIMHDDAKTPVNEVAPAMTQSLTDSITLNELDDDSMIISQTQPTTTEESEALTVVTSPLDTSSPRVLDQFASMLAAGKGDSTPSSSEQQPKTSTVTSSSTGPNSSTTGNVSKEPQEEDLQIQFEYVRALQQRISQISTQRRKSSKGEAPNLQLNSSAPVIESAEDPAKPAEEPLVSMRPRTTSISGKVPEIPTLSSKLEEITKERTKQKDLIHDLVMDKLQSKKQLNAEKRLHRSRQRSLLTSGYASGSSLSPTPKLAAACSPQDSNCSSQAHYHASTAEEAPKPPAERPLQKSATSTYVSPYRTVQAPTRSADLYKPRPFSEHIDSNALAGYKLGKTASFNGGKLGDFAKPIAPARVNRGGGVATADIANISASTENLRSEARARARLKSNTELGLSPEEKMQLIRSRLHYDQNRSLKPKQLEEMPSGDLAARARKMSASKSVNDLAYMVGQQQQQQVEKDAVLQAKAADFTSDPNLASGGQEKAGKTKSGRRPKDPERRKSLIQSLSSFFQKGSGSAASSSKEQGGAVAAVHSEQSERPGTSSSGTPTISDAAGGGGGGGGVFSRFRISPKSKEKSKSCFDLRNFGFGDKDMLVCNAASPAGATSASQKNHSQEYLNTTNNSRYRKQTNTAKPKPESFSSSSPQLYIHKPHHLAAAHPSALDDQTPPPIPPLPLNYQRSDDESYANETREHKKQRAISKASRQAELKRLRIAQEIQREQEEIEVQLKDLEARGVLIEKALRGEAQNIENLDATKDNDEKLLKELLEIWRNITALKKRDEELTIRQQELQLEYRHAQLKEELNLRLSCNKLDKSSADVAAEGAILNEMLEIVAKRAALRPTASQLDLTAAGSASTSAEATGIKLTGQPHDHEESII.

Residues 1–16 (MSRQHQRHHQQHHHLP) show a composition bias toward basic residues. Residues 1 to 36 (MSRQHQRHHQQHHHLPPHQQPQQQMPQQQQQLTAQQ) are disordered. The interval 1–520 (MSRQHQRHHQ…LNRESVNSWQ (520 aa)) is monooxygenase domain. Residues 20–36 (QPQQQMPQQQQQLTAQQ) show a composition bias toward low complexity. Residues Cys-138, 157–159 (EKR), 164–166 (RNN), Phe-224, Tyr-334, and Asp-434 contribute to the FAD site. Residues 562–669 (LPQGATLLRW…YLDQICDLFR (108 aa)) enclose the Calponin-homology (CH) domain. Disordered regions lie at residues 746–795 (NIGG…RQQR), 948–993 (KKTE…FKDI), and 1026–1053 (QFGK…NNTV). Positions 753-769 (GAAAGVAGSGTGTTTQG) are enriched in low complexity. 4 stretches are compositionally biased toward basic and acidic residues: residues 783–795 (VDKT…RQQR), 948–966 (KKTE…KWSK), 980–993 (QRQD…FKDI), and 1028–1039 (GKKDEANSDEKN). Thr-1049 is modified (phosphothreonine). Residues 1072-1136 (EKCRFCKQTV…TQHFRLPPKP (65 aa)) enclose the LIM zinc-binding domain. Residues Cys-1074, Cys-1077, His-1095, Cys-1098, Cys-1101, Cys-1104, Cys-1126, and His-1129 each coordinate Zn(2+). The interval 1130-1182 (FRLPPKPLPQRTNKARKSAAAQPASPAVPPTAGSVPTAAATSEHMDTTPPRDQ) is disordered. Phosphoserine is present on residues Ser-1194, Ser-1199, and Ser-1212. Disordered regions lie at residues 1212-1378 (SGRN…PRKF), 1434-1591 (AGQK…NSKL), 1614-1648 (TVSA…NQVT), 1684-1781 (ALAK…TATS), and 1797-1825 (TKAK…KDEA). Over residues 1219–1229 (ESNNDSQSELS) the composition is skewed to low complexity. 2 stretches are compositionally biased toward acidic residues: residues 1230 to 1248 (SSDE…EADD) and 1269 to 1294 (EDSD…DTEG). Composition is skewed to basic and acidic residues over residues 1295–1308 (EEFK…RQEV) and 1322–1341 (ETEK…DRSS). The stretch at 1297–1320 (FKKARELRRQEVRLQPLPANLPTD) is one LRR 1 repeat. A compositionally biased stretch (polar residues) spans 1342–1363 (LKSGNSFESARSQPSTPLSTPT). Basic and acidic residues-rich tracts occupy residues 1365–1378 (VEME…PRKF) and 1483–1507 (DELK…ESLK). A compositionally biased stretch (polar residues) spans 1516 to 1535 (GSSTNVSRSNSLKSNASNGS). Residues 1568–1578 (DQDEDMDVDED) are compositionally biased toward acidic residues. The segment covering 1579-1591 (VERKPNKELNSKL) has biased composition (basic and acidic residues). One copy of the LRR 2 repeat lies at 1579–1601 (VERKPNKELNSKLKEIQASSFAG). Residues 1629 to 1648 (FPNQKQEKSSTSSTNKNQVT) are compositionally biased toward polar residues. The span at 1700–1721 (EKTKKEVEKEGESKKITKKVAD) shows a compositional bias: basic and acidic residues. The stretch at 1730 to 1754 (QASLDTFSLREHQMDGALDLTKKKG) is one LRR 3 repeat. 2 stretches are compositionally biased toward low complexity: residues 1767–1781 (KSGS…TATS) and 1804–1814 (EAAQESAVVEA). The span at 1815-1825 (PPEKKPPKDEA) shows a compositional bias: basic and acidic residues. The stretch at 1931-1956 (AFKLRRMESTTSNLSSLTRSRESLVS) is one LRR 4 repeat. The span at 1992–2009 (AKKEEQEKESKILAKPDP) shows a compositional bias: basic and acidic residues. Disordered stretches follow at residues 1992–2013 (AKKE…LDNL), 2028–2092 (LAAS…KPAS), 2145–2172 (KNLP…MSRR), 2329–2379 (NVQD…DMPP), 2418–2549 (EDVD…PRRN), 2604–2676 (AEQR…STSC), and 2699–2866 (PKKL…TTTT). Composition is skewed to low complexity over residues 2155 to 2169 (SSNS…SLIM) and 2349 to 2358 (SSSSSSEPSL). Basic and acidic residues predominate over residues 2423-2450 (VDHSKEGIKKIETAPEEVRKVTEPEDVA). Low complexity predominate over residues 2453–2476 (IPSPIKPSISQSNSLKSENSSGSS). The segment covering 2490–2502 (SSKENSSDWDMEK) has biased composition (basic and acidic residues). One copy of the LRR 5 repeat lies at 2548–2574 (RNKMRAISPSTNPVQLLNNLPSDVDDE). Low complexity predominate over residues 2612 to 2623 (LQSSSNSSSKRS). The span at 2636–2648 (RGTTQDTNRTQDT) shows a compositional bias: polar residues. Over residues 2649–2664 (ASRHEGTPPMFKKLDV) the composition is skewed to basic and acidic residues. The span at 2667-2676 (SGTSMDSTSC) shows a compositional bias: polar residues. The LRR 6 repeat unit spans residues 2680 to 2704 (RSSFAFIELQDNKPVIVPMPKKLKL). Positions 2739–2752 (GEVDLGDSDNEDET) are enriched in acidic residues. The segment covering 2777-2791 (KWPDGKTVFDKRAES) has biased composition (basic and acidic residues). Low complexity predominate over residues 2846 to 2866 (SLQSLSAQSSQDTDTLSTTTT). One copy of the LRR 7 repeat lies at 2934–2957 (LTSYRPRHYASSTLNRFPNTTIRK). Disordered regions lie at residues 3411-3456 (HIKE…PDSV) and 3468-3488 (SKPE…SSDS). A compositionally biased stretch (basic and acidic residues) spans 3435–3451 (EEKRDSPEKDVAEHELY). Residues 3474–3488 (STTGSSGSICSSSDS) show a composition bias toward low complexity. LRR repeat units follow at residues 3545–3568 (PEDV…LKTN) and 3642–3665 (SQAV…PTTP). 8 disordered regions span residues 3655–3694 (LART…GTGQ), 3809–3830 (PKKT…PPLM), 3888–3909 (QPTT…DTSS), 3922–3962 (AGKG…EPQE), 3983–4037 (STQR…VPEI), 4072–4150 (LNAE…SPYR), 4260–4284 (QNRS…ARKM), and 4317–4347 (DFTS…PERR). 2 stretches are compositionally biased toward polar residues: residues 3900–3909 (VVTSPLDTSS) and 3927–3937 (STPSSSEQQPK). Over residues 3938-3957 (TSTVTSSSTGPNSSTTGNVS) the composition is skewed to low complexity. Polar residues-rich tracts occupy residues 4084–4099 (RSLL…SLSP) and 4109–4118 (PQDSNCSSQA). 2 stretches are compositionally biased toward basic and acidic residues: residues 4127-4137 (EAPKPPAERPL) and 4260-4270 (QNRSLKPKQLE). Phosphoserine occurs at positions 4349 and 4353. Low complexity-rich tracts occupy residues 4360–4374 (KGSG…EQGG) and 4387–4396 (PGTSSSGTPT). A disordered region spans residues 4360–4414 (KGSGSAASSSKEQGGAVAAVHSEQSERPGTSSSGTPTISDAAGGGGGGGGVFSRF). Gly residues predominate over residues 4401–4410 (AGGGGGGGGV). Ser-4426 is subject to Phosphoserine. Disordered regions lie at residues 4449-4492 (AGAT…SSPQ) and 4505-4544 (HPSA…KQRA). The span at 4450–4479 (GATSASQKNHSQEYLNTTNNSRYRKQTNTA) shows a compositional bias: polar residues. Residues 4550 to 4705 (RQAELKRLRI…AAGSASTSAE (156 aa)) enclose the bMERB domain. The stretch at 4646 to 4668 (KEELNLRLSCNKLDKSSADVAAE) is one LRR 10 repeat. The segment at 4704–4723 (AEATGIKLTGQPHDHEESII) is disordered.

It belongs to the Mical family. As to quaternary structure, interacts with plexA. FAD serves as cofactor. Present in neuronal cell bodies, along axons, and in growth cones. Appears in the nervous system at stage 13 and labels motor and CNS projections, and at later embryonic stages, it is present on axons that make up all motor axon pathways: the intersegmental nerve (ISN), the intersegmental nerves b and d (ISNb and ISNd), and the segmental nerves a and c (SNa and SNc). Also present in segment boundaries at the position of muscle attachment sites and at low levels in the lateral cluster of chordotonal organs (at protein level). Localizes to growing bristle tips in close proximity to the bristle cell membrane and at sites of bristle branching and actin localization. Localizes to growth cones.

It localises to the cytoplasm. The catalysed reaction is L-methionyl-[F-actin] + NADPH + O2 + H(+) = L-methionyl-(R)-S-oxide-[F-actin] + NADP(+) + H2O. Functionally, monooxygenase that promotes depolymerization of F-actin by mediating oxidation of specific methionine residues on actin. Acts by modifying actin subunits at 'Met-44' and 'Met-47' through the addition of oxygen to form methionine-sulfoxide, leading to promote actin filament disassembly and prevent repolymerization. Plays a key role in semaphorin-plexin repulsive axon guidance and cell morphological changes, probably via its ability to modify and regulate actin. This chain is [F-actin]-monooxygenase Mical (Mical), found in Drosophila melanogaster (Fruit fly).